The following is a 306-amino-acid chain: Acetyl-coenzyme A carboxylase carboxyl transferase subunit beta (306 aa).

The region spanning 25–294 (LWIKCPETGE…TVVGANDDKT (270 aa)) is the CoA carboxyltransferase N-terminal domain.

It belongs to the AccD/PCCB family. As to quaternary structure, acetyl-CoA carboxylase is a heterohexamer composed of biotin carboxyl carrier protein (AccB), biotin carboxylase (AccC) and two subunits each of ACCase subunit alpha (AccA) and ACCase subunit beta (AccD).

Its subcellular location is the cytoplasm. It carries out the reaction N(6)-carboxybiotinyl-L-lysyl-[protein] + acetyl-CoA = N(6)-biotinyl-L-lysyl-[protein] + malonyl-CoA. It functions in the pathway lipid metabolism; malonyl-CoA biosynthesis; malonyl-CoA from acetyl-CoA: step 1/1. In terms of biological role, component of the acetyl coenzyme A carboxylase (ACC) complex. Biotin carboxylase (BC) catalyzes the carboxylation of biotin on its carrier protein (BCCP) and then the CO(2) group is transferred by the transcarboxylase to acetyl-CoA to form malonyl-CoA. The polypeptide is Acetyl-coenzyme A carboxylase carboxyl transferase subunit beta (Allorhizobium ampelinum (strain ATCC BAA-846 / DSM 112012 / S4) (Agrobacterium vitis (strain S4))).